We begin with the raw amino-acid sequence, 301 residues long: Cytosolic sulfotransferase 3 (301 aa).

Residue 53 to 58 coordinates 3'-phosphoadenylyl sulfate; that stretch reads KAGTTW. His-115 functions as the Proton acceptor in the catalytic mechanism. Residues Arg-137, Ser-145, Tyr-201, 235 to 240, and 263 to 265 each bind 3'-phosphoadenylyl sulfate; these read VQFDAM and RKG.

It belongs to the sulfotransferase 1 family.

Its subcellular location is the cytoplasm. Inhibited by Hg(2+), Co(2+), Zn(2+), Cd(2+), Cu(2+) and Pb(2+) ions. Activated slightly by Mn(2+), Ca(2+) and Mg(2+) ions. In terms of biological role, sulfotransferase that utilizes 3'-phospho-5'-adenylyl sulfate (PAPS) as sulfonate donor to catalyze the sulfate conjugation of a variety of xenobiotic and endogenous compounds, including dopamine, T3 (triiodo-L-thyronine), T4 (thyroxine), estrone, DHEA (dehydroepiandrosterone), flavonoids, isoflavonoids and other phenolic compounds. The chain is Cytosolic sulfotransferase 3 from Danio rerio (Zebrafish).